Reading from the N-terminus, the 218-residue chain is Small ribosomal subunit protein uS3 (218 aa).

The KH type-2 domain occupies 38–106; the sequence is LRNDLKKKLM…PVHLNIEEVK (69 aa).

Belongs to the universal ribosomal protein uS3 family. Part of the 30S ribosomal subunit. Forms a tight complex with proteins S10 and S14.

Binds the lower part of the 30S subunit head. Binds mRNA in the 70S ribosome, positioning it for translation. In Legionella pneumophila (strain Paris), this protein is Small ribosomal subunit protein uS3.